The following is a 429-amino-acid chain: Adenylosuccinate synthetase (429 aa).

GTP contacts are provided by residues 12–18 and 40–42; these read GDEGKGK and GHT. Asp13 functions as the Proton acceptor in the catalytic mechanism. Residues Asp13 and Gly40 each contribute to the Mg(2+) site. IMP-binding positions include 13-16, 38-41, Thr128, Arg142, Gln223, Thr238, and Arg302; these read DEGK and NAGH. His41 (proton donor) is an active-site residue. Position 298 to 304 (298 to 304) interacts with substrate; the sequence is VNTGRPR. GTP-binding positions include Arg304, 330–332, and 412–414; these read KLD and GVG.

It belongs to the adenylosuccinate synthetase family. Homodimer. Requires Mg(2+) as cofactor.

The protein localises to the cytoplasm. The catalysed reaction is IMP + L-aspartate + GTP = N(6)-(1,2-dicarboxyethyl)-AMP + GDP + phosphate + 2 H(+). It participates in purine metabolism; AMP biosynthesis via de novo pathway; AMP from IMP: step 1/2. In terms of biological role, plays an important role in the de novo pathway of purine nucleotide biosynthesis. Catalyzes the first committed step in the biosynthesis of AMP from IMP. The chain is Adenylosuccinate synthetase from Paenarthrobacter aurescens (strain TC1).